Here is a 1229-residue protein sequence, read N- to C-terminus: Chitin synthase 4 (1229 aa).

The tract at residues 1–196 (MSLPERPGAK…IVKEGKRKEK (196 aa)) is disordered. Residues 1–202 (MSLPERPGAK…RKEKIPEQLR (202 aa)) are Cytoplasmic-facing. Residues 18-27 (SYRKSPSRRN) are compositionally biased toward basic residues. The segment covering 43-66 (GQHQRGPSVNSFAETIRSPNSNIE) has biased composition (polar residues). Over residues 92-105 (IRPERNRIDRDHPN) the composition is skewed to basic and acidic residues. The segment covering 137 to 150 (SGPPSGSNSASGSG) has biased composition (low complexity). Basic and acidic residues-rich tracts occupy residues 164-177 (SGRETVAEKSDNTR) and 187-196 (IVKEGKRKEK). A helical membrane pass occupies residues 203 to 223 (PPSAWNVYCAVITFWSPDFIM). Topologically, residues 224-240 (KCCGMPAKAQRRAWREK) are extracellular. Residues 241 to 261 (IGLISLILIIMGVVGFLTFGF) form a helical membrane-spanning segment. The Cytoplasmic segment spans residues 262–495 (NQAVCGGPVL…IKVGTVDTDT (234 aa)). Residues 496 to 516 (VGCIAAKVVLYVSLALILSVV) traverse the membrane as a helical segment. Over 517–1054 (GARFTLALIF…LCGTFCFSMQ (538 aa)) the chain is Extracellular. Disordered regions lie at residues 539 to 589 (TSQT…RSSF) and 601 to 648 (GAER…DPYA). Over residues 568–581 (GDVGSSVAGASSSD) the composition is skewed to low complexity. Asn-608, Asn-635, and Asn-1030 each carry an N-linked (GlcNAc...) asparagine glycan. A compositionally biased stretch (polar residues) spans 608 to 648 (NKSMPTTMASQASGGYMGPSSTAYRETNESRTSFLKSDPYA). A helical transmembrane segment spans residues 1055–1075 (FVIFIELIGTLVLPAAIAFTF). At 1076-1088 (YVVIISIINQPPQ) the chain is on the cytoplasmic side. Residues 1089 to 1109 (IIPLVLLGLILGLPAILIIIT) traverse the membrane as a helical segment. The Extracellular segment spans residues 1110–1114 (AHSWS). A helical transmembrane segment spans residues 1115–1135 (YVLWMLIYLLSLPVWNFVLPA). Residues 1136-1229 (YAFWKFDDFS…QQYDEYYSDA (94 aa)) lie on the Cytoplasmic side of the membrane. The tract at residues 1210 to 1229 (WASAPPHHHQQQYDEYYSDA) is disordered.

It belongs to the chitin synthase family. Class IV subfamily.

It localises to the cell membrane. It carries out the reaction [(1-&gt;4)-N-acetyl-beta-D-glucosaminyl](n) + UDP-N-acetyl-alpha-D-glucosamine = [(1-&gt;4)-N-acetyl-beta-D-glucosaminyl](n+1) + UDP + H(+). In terms of biological role, polymerizes chitin, a structural polymer of the cell wall and septum, by transferring the sugar moiety of UDP-GlcNAc to the non-reducing end of the growing chitin polymer. Might function as a negative regulator on expression of other CHS genes. In Pyricularia oryzae (strain 70-15 / ATCC MYA-4617 / FGSC 8958) (Rice blast fungus), this protein is Chitin synthase 4.